Consider the following 535-residue polypeptide: Bifunctional purine biosynthesis protein PurH (535 aa).

The MGS-like domain occupies 6-151 (TRLPVRRALI…KNHKDVAIVV (146 aa)).

Belongs to the PurH family.

The enzyme catalyses (6R)-10-formyltetrahydrofolate + 5-amino-1-(5-phospho-beta-D-ribosyl)imidazole-4-carboxamide = 5-formamido-1-(5-phospho-D-ribosyl)imidazole-4-carboxamide + (6S)-5,6,7,8-tetrahydrofolate. It carries out the reaction IMP + H2O = 5-formamido-1-(5-phospho-D-ribosyl)imidazole-4-carboxamide. It functions in the pathway purine metabolism; IMP biosynthesis via de novo pathway; 5-formamido-1-(5-phospho-D-ribosyl)imidazole-4-carboxamide from 5-amino-1-(5-phospho-D-ribosyl)imidazole-4-carboxamide (10-formyl THF route): step 1/1. Its pathway is purine metabolism; IMP biosynthesis via de novo pathway; IMP from 5-formamido-1-(5-phospho-D-ribosyl)imidazole-4-carboxamide: step 1/1. This is Bifunctional purine biosynthesis protein PurH from Pseudomonas putida (strain GB-1).